A 76-amino-acid polypeptide reads, in one-letter code: MDNSAQKSCSYTPVACYNAYTPAQQGFYVVPDYQTYGYQTLTSARAGALPSCSRYFSVQNAYGSCSTMSYVRKDCI.

It belongs to the IIV-6 342R family.

This is an uncharacterized protein from Invertebrate iridescent virus 3 (IIV-3).